The following is a 609-amino-acid chain: Large ribosomal subunit assembly factor BipA (609 aa).

The tr-type G domain maps to 3 to 198 (QNIRNIAIIA…AIIKYAPAPN (196 aa)). Residues 15–20 (DHGKTT) and 128–131 (NKID) contribute to the GTP site.

It belongs to the TRAFAC class translation factor GTPase superfamily. Classic translation factor GTPase family. BipA subfamily. In terms of assembly, monomer.

It is found in the cytoplasm. It carries out the reaction GTP + H2O = GDP + phosphate + H(+). In terms of biological role, a 50S ribosomal subunit assembly protein with GTPase activity, required for 50S subunit assembly at low temperatures, may also play a role in translation. Binds GTP and analogs. Binds the 70S ribosome between the 30S and 50S subunits, in a similar position as ribosome-bound EF-G; it contacts a number of ribosomal proteins, both rRNAs and the A-site tRNA. The sequence is that of Large ribosomal subunit assembly factor BipA from Buchnera aphidicola subsp. Schizaphis graminum (strain Sg).